Reading from the N-terminus, the 208-residue chain is Glycerol-3-phosphate acyltransferase (208 aa).

Transmembrane regions (helical) follow at residues 3–23, 55–75, 81–101, 113–133, and 155–175; these read IIIM…VIIG, IVMV…TLLF, YTLL…YIGF, ILLA…LLLV, and IFYY…LFIF.

The protein belongs to the PlsY family. Probably interacts with PlsX.

Its subcellular location is the cell membrane. It carries out the reaction an acyl phosphate + sn-glycerol 3-phosphate = a 1-acyl-sn-glycero-3-phosphate + phosphate. Its pathway is lipid metabolism; phospholipid metabolism. In terms of biological role, catalyzes the transfer of an acyl group from acyl-phosphate (acyl-PO(4)) to glycerol-3-phosphate (G3P) to form lysophosphatidic acid (LPA). This enzyme utilizes acyl-phosphate as fatty acyl donor, but not acyl-CoA or acyl-ACP. This chain is Glycerol-3-phosphate acyltransferase, found in Lactiplantibacillus plantarum (strain ATCC BAA-793 / NCIMB 8826 / WCFS1) (Lactobacillus plantarum).